Reading from the N-terminus, the 199-residue chain is Imidazoleglycerol-phosphate dehydratase (199 aa).

Belongs to the imidazoleglycerol-phosphate dehydratase family.

The protein resides in the cytoplasm. It carries out the reaction D-erythro-1-(imidazol-4-yl)glycerol 3-phosphate = 3-(imidazol-4-yl)-2-oxopropyl phosphate + H2O. It participates in amino-acid biosynthesis; L-histidine biosynthesis; L-histidine from 5-phospho-alpha-D-ribose 1-diphosphate: step 6/9. The sequence is that of Imidazoleglycerol-phosphate dehydratase from Paramagnetospirillum magneticum (strain ATCC 700264 / AMB-1) (Magnetospirillum magneticum).